The chain runs to 83 residues: Cytochrome b559 subunit alpha (83 aa).

Residues 21 to 35 form a helical membrane-spanning segment; sequence VIHSITIPSLFIAGW. Heme is bound at residue His-23.

This sequence belongs to the PsbE/PsbF family. Heterodimer of an alpha subunit and a beta subunit. PSII is composed of 1 copy each of membrane proteins PsbA, PsbB, PsbC, PsbD, PsbE, PsbF, PsbH, PsbI, PsbJ, PsbK, PsbL, PsbM, PsbT, PsbX, PsbY, PsbZ, Psb30/Ycf12, at least 3 peripheral proteins of the oxygen-evolving complex and a large number of cofactors. It forms dimeric complexes. It depends on heme b as a cofactor.

It localises to the plastid. The protein resides in the chloroplast thylakoid membrane. In terms of biological role, this b-type cytochrome is tightly associated with the reaction center of photosystem II (PSII). PSII is a light-driven water:plastoquinone oxidoreductase that uses light energy to abstract electrons from H(2)O, generating O(2) and a proton gradient subsequently used for ATP formation. It consists of a core antenna complex that captures photons, and an electron transfer chain that converts photonic excitation into a charge separation. The protein is Cytochrome b559 subunit alpha of Liriodendron tulipifera (Tuliptree).